A 611-amino-acid polypeptide reads, in one-letter code: Chaperone protein DnaK (611 aa).

Threonine 173 is modified (phosphothreonine; by autocatalysis). The segment covering 579-592 (AAGQAEGAQGAQDA) has biased composition (low complexity). Positions 579–611 (AAGQAEGAQGAQDAGAKKDNVVDAEFEEVKEDK) are disordered. A compositionally biased stretch (acidic residues) spans 600–611 (VDAEFEEVKEDK).

Belongs to the heat shock protein 70 family.

Functionally, acts as a chaperone. In Bacillus mycoides (strain KBAB4) (Bacillus weihenstephanensis), this protein is Chaperone protein DnaK.